The sequence spans 551 residues: Glucans biosynthesis protein D (551 aa).

A signal peptide (tat-type signal) is located at residues 1 to 32; sequence MDRRRFIKGSMAMAAVCGTSGIASLFSQAAFA.

The protein belongs to the OpgD/OpgG family. Post-translationally, predicted to be exported by the Tat system. The position of the signal peptide cleavage has not been experimentally proven.

The protein localises to the periplasm. The protein operates within glycan metabolism; osmoregulated periplasmic glucan (OPG) biosynthesis. In terms of biological role, probably involved in the control of the structural glucose backbone of osmoregulated periplasmic glucans (OPGs). In Escherichia coli O9:H4 (strain HS), this protein is Glucans biosynthesis protein D.